The primary structure comprises 217 residues: CASP-like protein UU4 (217 aa).

The segment covering 1–11 (MYTGQSDHRPE) has biased composition (basic and acidic residues). Residues 1 to 21 (MYTGQSDHRPEGVGVNPGSPN) form a disordered region. At 1-61 (MYTGQSDHRP…VKKNINHMSG (61 aa)) the chain is on the cytoplasmic side. A helical transmembrane segment spans residues 62 to 82 (LSLGLRVSEFVLSVIAFSLMA). At 83-98 (SAEQNGAVYSTFTSYS) the chain is on the extracellular side. The chain crosses the membrane as a helical span at residues 99-119 (FVLAINVLVALYAIGQIILSV). Residues 120–141 (MPLVSGSAPKKLYLFITFGCDQ) lie on the Cytoplasmic side of the membrane. The chain crosses the membrane as a helical span at residues 142–162 (LSAFLLMAAGAAGASVAMLIN). Topologically, residues 163–187 (RKGVIDDYGSGCIDGKITVFCAHAE) are extracellular. A helical membrane pass occupies residues 188-208 (ASIAFTFLSFFCVMISSYLGV). At 209–217 (YNLAPYLIL) the chain is on the cytoplasmic side.

Belongs to the Casparian strip membrane proteins (CASP) family. Homodimer and heterodimers.

The protein localises to the cell membrane. The chain is CASP-like protein UU4 from Physcomitrium patens (Spreading-leaved earth moss).